Here is a 368-residue protein sequence, read N- to C-terminus: 3-dehydroquinate synthase (368 aa).

NAD(+) is bound by residues 109–113 (GVIGD), 133–134 (TS), K146, K155, and 173–176 (TLQT). Residues E188, H253, and H270 each contribute to the Zn(2+) site.

Belongs to the sugar phosphate cyclases superfamily. Dehydroquinate synthase family. Requires Co(2+) as cofactor. Zn(2+) is required as a cofactor. The cofactor is NAD(+).

The protein resides in the cytoplasm. It carries out the reaction 7-phospho-2-dehydro-3-deoxy-D-arabino-heptonate = 3-dehydroquinate + phosphate. The protein operates within metabolic intermediate biosynthesis; chorismate biosynthesis; chorismate from D-erythrose 4-phosphate and phosphoenolpyruvate: step 2/7. Its function is as follows. Catalyzes the conversion of 3-deoxy-D-arabino-heptulosonate 7-phosphate (DAHP) to dehydroquinate (DHQ). This is 3-dehydroquinate synthase from Synechococcus sp. (strain ATCC 27144 / PCC 6301 / SAUG 1402/1) (Anacystis nidulans).